Reading from the N-terminus, the 327-residue chain is Undecaprenyl-phosphate 4-deoxy-4-formamido-L-arabinose transferase (327 aa).

2 consecutive transmembrane segments (helical) span residues 236-256 (LSIF…LLVV) and 270-290 (VFML…GMGL).

This sequence belongs to the glycosyltransferase 2 family.

The protein resides in the cell inner membrane. It catalyses the reaction UDP-4-deoxy-4-formamido-beta-L-arabinose + di-trans,octa-cis-undecaprenyl phosphate = 4-deoxy-4-formamido-alpha-L-arabinopyranosyl di-trans,octa-cis-undecaprenyl phosphate + UDP. It participates in glycolipid biosynthesis; 4-amino-4-deoxy-alpha-L-arabinose undecaprenyl phosphate biosynthesis; 4-amino-4-deoxy-alpha-L-arabinose undecaprenyl phosphate from UDP-4-deoxy-4-formamido-beta-L-arabinose and undecaprenyl phosphate: step 1/2. The protein operates within bacterial outer membrane biogenesis; lipopolysaccharide biosynthesis. Functionally, catalyzes the transfer of 4-deoxy-4-formamido-L-arabinose from UDP to undecaprenyl phosphate. The modified arabinose is attached to lipid A and is required for resistance to polymyxin and cationic antimicrobial peptides. In Klebsiella pneumoniae subsp. pneumoniae (strain ATCC 700721 / MGH 78578), this protein is Undecaprenyl-phosphate 4-deoxy-4-formamido-L-arabinose transferase.